A 220-amino-acid chain; its full sequence is Putative O-methyltransferase Mmcs_3995 (220 aa).

S-adenosyl-L-methionine contacts are provided by residues V47, E69, 71–72, S77, D95, and V96; that span reads GT. D143 lines the substrate pocket. Residue D145 coordinates S-adenosyl-L-methionine.

The protein belongs to the class I-like SAM-binding methyltransferase superfamily. Cation-dependent O-methyltransferase family.

The protein is Putative O-methyltransferase Mmcs_3995 of Mycobacterium sp. (strain MCS).